A 293-amino-acid chain; its full sequence is Protein nud-2 (293 aa).

Residues 36-147 (EIEKMMDSEL…EKIAMLESEL (112 aa)) are a coiled coil. The required for interaction with unc-83 isoform c stretch occupies residues 239–293 (KSQRVSTGTGAGACINRIVKDLMTKVERLDSILSTIRVSNNSSNNNSSHLTTTRA).

Belongs to the nudE family. Component of a dynein-regulating complex composed of at least lis-1 and nud-2. Interacts with lis-1; the interaction is direct. Interacts (via C-terminus) with unc-83; the interaction is direct, and is required for recruitment of nud-2 to the nuclear envelope. As to expression, expressed in ventral cord neurons, the pharynx, seam cells of the hypodermis and in vulval muscle cells.

It is found in the nucleus envelope. Functionally, part of a complex with lis-1, which is recruited to the nuclear envelope by unc-83, where, in turn, it recruits dynein to the nuclear surface and regulates nuclear migration in hypodermal precursor cells. Plays a role in GABAergic synaptic vesicle localization in the ventral nerve cord. This is Protein nud-2 from Caenorhabditis elegans.